The sequence spans 144 residues: Large ribosomal subunit protein uL15 (144 aa).

The tract at residues 1–57 is disordered; it reads MELNNLKPAEGSKHAKRRVGRGIGSGLGKTAGRGHKGQKSRSGGFHKVGFEGGQMPL. The segment covering 21–31 has biased composition (gly residues); sequence RGIGSGLGKTA.

Belongs to the universal ribosomal protein uL15 family. Part of the 50S ribosomal subunit.

Binds to the 23S rRNA. The polypeptide is Large ribosomal subunit protein uL15 (Paraburkholderia phytofirmans (strain DSM 17436 / LMG 22146 / PsJN) (Burkholderia phytofirmans)).